The following is a 288-amino-acid chain: Homoserine kinase (288 aa).

79 to 89 (PLARGLGSSSS) is an ATP binding site.

This sequence belongs to the GHMP kinase family. Homoserine kinase subfamily.

The protein resides in the cytoplasm. It catalyses the reaction L-homoserine + ATP = O-phospho-L-homoserine + ADP + H(+). It participates in amino-acid biosynthesis; L-threonine biosynthesis; L-threonine from L-aspartate: step 4/5. Functionally, catalyzes the ATP-dependent phosphorylation of L-homoserine to L-homoserine phosphate. The chain is Homoserine kinase from Streptococcus sanguinis (strain SK36).